The chain runs to 555 residues: Pentatricopeptide repeat-containing protein At2g44880 (555 aa).

PPR repeat units lie at residues 41–75, 77–111, 112–142, 143–173, 175–205, 206–240, 241–267, 273–307, 308–342, 343–370, 373–407, and 408–438; these read DSFL…TCFA, DNFT…GFCA, DMYV…MPHR, SEVS…MPHV, DVVI…MTHK, TVIT…NLVS, WNTM…MQAT, DDVT…KLDK, KVKV…QVAS, WNAM…MIEE, DEIT…GLNA, and KIEH…MPFE. Positions 443 to 518 are type E motif; it reads ILSSFLSACG…EVGCSLIEIN (76 aa). The interval 519 to 549 is type E(+) motif; that stretch reads YIVSEFISGDTTHPHRRSIHLVLGDLLMHMN.

It belongs to the PPR family. PCMP-E subfamily.

This chain is Pentatricopeptide repeat-containing protein At2g44880 (PCMP-E9), found in Arabidopsis thaliana (Mouse-ear cress).